We begin with the raw amino-acid sequence, 284 residues long: Nucleotide-binding protein Shewmr4_0670 (284 aa).

Residue G8–S15 participates in ATP binding. D56 to N59 is a binding site for GTP.

The protein belongs to the RapZ-like family.

Its function is as follows. Displays ATPase and GTPase activities. This chain is Nucleotide-binding protein Shewmr4_0670, found in Shewanella sp. (strain MR-4).